The chain runs to 476 residues: Angiotensinogen (476 aa).

The signal sequence occupies residues 1–24 (MAPAGMSLRATILCLLAWAGLAAG). Asn38, Asn161, Asn295, and Asn319 each carry an N-linked (GlcNAc...) asparagine glycan. Cys42 and Cys162 are disulfide-bonded.

This sequence belongs to the serpin family. Post-translationally, in response to low blood pressure, the enzyme renin/REN cleaves angiotensinogen to produce angiotensin-1. Angiotensin-1 is a substrate of ACE (angiotensin converting enzyme) that removes a dipeptide to yield the physiologically active peptide angiotensin-2. Angiotensin-1 and angiotensin-2 can be further processed to generate angiotensin-3, angiotensin-4. Angiotensin 1-9 is cleaved from angiotensin-1 by ACE2 and can be further processed by ACE to produce angiotensin 1-7, angiotensin 1-5 and angiotensin 1-4. Angiotensin 1-7 has also been proposed to be cleaved from angiotensin-2 by ACE2 or from angiotensin-1 by MME (neprilysin). In terms of processing, the disulfide bond is labile. Angiotensinogen is present in the circulation in a near 40:60 ratio with the oxidized disulfide-bonded form, which preferentially interacts with receptor-bound renin.

The protein resides in the secreted. In terms of biological role, essential component of the renin-angiotensin system (RAS), a potent regulator of blood pressure, body fluid and electrolyte homeostasis. Functionally, acts directly on vascular smooth muscle as a potent vasoconstrictor, affects cardiac contractility and heart rate through its action on the sympathetic nervous system, and alters renal sodium and water absorption through its ability to stimulate the zona glomerulosa cells of the adrenal cortex to synthesize and secrete aldosterone. Acts by binding to angiotensin receptors AGTR1 and AGTR2. Also binds the DEAR/FBXW7-AS1 receptor. Stimulates aldosterone release. Its function is as follows. Is a ligand for the G-protein coupled receptor MAS1. Has vasodilator and antidiuretic effects. Has an antithrombotic effect that involves MAS1-mediated release of nitric oxide from platelets. The protein is Angiotensinogen (AGT) of Gorilla gorilla gorilla (Western lowland gorilla).